Here is a 225-residue protein sequence, read N- to C-terminus: UPF0758 protein BCG9842_B0662 (225 aa).

The MPN domain maps to 103–225; sequence SIRSPEDCAK…FVSLKEKGHI (123 aa). Positions 174, 176, and 187 each coordinate Zn(2+). Residues 174-187 carry the JAMM motif motif; that stretch reads HNHPSGDPTPSRED.

This sequence belongs to the UPF0758 family.

This chain is UPF0758 protein BCG9842_B0662, found in Bacillus cereus (strain G9842).